A 329-amino-acid chain; its full sequence is Fructose-1,6-bisphosphatase class 1 (329 aa).

Positions 84, 103, 105, and 106 each coordinate Mg(2+). Residues 106–109 (DGSS), N196, and K262 contribute to the substrate site. E268 is a binding site for Mg(2+).

It belongs to the FBPase class 1 family. In terms of assembly, homotetramer. The cofactor is Mg(2+).

Its subcellular location is the cytoplasm. The enzyme catalyses beta-D-fructose 1,6-bisphosphate + H2O = beta-D-fructose 6-phosphate + phosphate. It participates in carbohydrate biosynthesis; gluconeogenesis. This Shewanella halifaxensis (strain HAW-EB4) protein is Fructose-1,6-bisphosphatase class 1.